Here is a 305-residue protein sequence, read N- to C-terminus: UDP-3-O-acyl-N-acetylglucosamine deacetylase (305 aa).

Residues His-78, His-237, and Asp-241 each contribute to the Zn(2+) site. Catalysis depends on His-264, which acts as the Proton donor.

The protein belongs to the LpxC family. It depends on Zn(2+) as a cofactor.

The catalysed reaction is a UDP-3-O-[(3R)-3-hydroxyacyl]-N-acetyl-alpha-D-glucosamine + H2O = a UDP-3-O-[(3R)-3-hydroxyacyl]-alpha-D-glucosamine + acetate. It participates in glycolipid biosynthesis; lipid IV(A) biosynthesis; lipid IV(A) from (3R)-3-hydroxytetradecanoyl-[acyl-carrier-protein] and UDP-N-acetyl-alpha-D-glucosamine: step 2/6. In terms of biological role, catalyzes the hydrolysis of UDP-3-O-myristoyl-N-acetylglucosamine to form UDP-3-O-myristoylglucosamine and acetate, the committed step in lipid A biosynthesis. In Dechloromonas aromatica (strain RCB), this protein is UDP-3-O-acyl-N-acetylglucosamine deacetylase.